The following is a 553-amino-acid chain: Hydroxylamine reductase (553 aa).

The [2Fe-2S] cluster site is built by cysteine 3, cysteine 6, cysteine 18, and cysteine 25. Positions 252, 276, 320, 408, 436, 461, 495, and 497 each coordinate hybrid [4Fe-2O-2S] cluster. Cysteine 408 carries the cysteine persulfide modification.

The protein belongs to the HCP family. [2Fe-2S] cluster is required as a cofactor. It depends on hybrid [4Fe-2O-2S] cluster as a cofactor.

The protein localises to the cytoplasm. The enzyme catalyses A + NH4(+) + H2O = hydroxylamine + AH2 + H(+). Catalyzes the reduction of hydroxylamine to form NH(3) and H(2)O. In Photobacterium phosphoreum, this protein is Hydroxylamine reductase.